A 343-amino-acid polypeptide reads, in one-letter code: Selenide, water dikinase (343 aa).

Cys15 is an active-site residue. ATP contacts are provided by residues Lys18 and 46–48 (HKD). Residue Asp49 coordinates Mg(2+). ATP is bound by residues Asp66, Asp89, and 137-139 (GHS). A Mg(2+)-binding site is contributed by Asp89. Mg(2+) is bound at residue Asp225.

The protein belongs to the selenophosphate synthase 1 family. Class I subfamily. Homodimer. Mg(2+) is required as a cofactor.

The enzyme catalyses hydrogenselenide + ATP + H2O = selenophosphate + AMP + phosphate + 2 H(+). Functionally, synthesizes selenophosphate from selenide and ATP. This is Selenide, water dikinase from Sulfurimonas denitrificans (strain ATCC 33889 / DSM 1251) (Thiomicrospira denitrificans (strain ATCC 33889 / DSM 1251)).